A 1302-amino-acid chain; its full sequence is Zinc finger protein 536 (1302 aa).

Residues 1 to 26 form a disordered region; the sequence is MEEASLCLGVSSTAPEAEPHLSGPVL. 7 C2H2-type zinc fingers span residues 130 to 152, 158 to 180, 274 to 297, 300 to 323, 345 to 367, 373 to 395, and 631 to 653; these read YPCP…MRTH, FKCP…LRTH, FRCT…RILH, YKCT…EKAH, FRCE…MRKH, HCCQ…MKVH, and TECP…SRVH. The disordered stretch occupies residues 650-736; the sequence is SRVHKRDRKS…IGEEAGRAGG (87 aa). Residues 657–676 show a composition bias toward basic and acidic residues; the sequence is RKSDEDALHVGVGLEERRGS. Residues 677 to 698 show a composition bias toward polar residues; it reads GSDQESQSVSRSTTPGSSNVTE. 2 C2H2-type zinc fingers span residues 753 to 775 and 781 to 803; these read KDCP…LRIH and YKCP…LERH. 4 disordered regions span residues 804–832, 855–897, 935–988, and 1133–1261; these read HRER…SKAP, GPAS…SKSS, KDTK…APTL, and NKNT…GLEK. A phosphoserine mark is found at S828 and S829. The span at 869 to 883 shows a compositional bias: polar residues; that stretch reads GDHSGQATGMPSELS. The segment covering 935-973 has biased composition (basic and acidic residues); the sequence is KDTKDKVPSDAHPMKAHTAEGGEEKASMKPSQRKSEKSQ. Acidic residues-rich tracts occupy residues 1161-1171 and 1179-1188; these read DLSDIASSEDM and NEDEELDTEP. A compositionally biased stretch (low complexity) spans 1198–1212; sequence LSKDGSSEGGDSLLS.

This sequence belongs to the krueppel C2H2-type zinc-finger protein family. As to expression, expressed predominantly in the brain, while a weak signal is also detected in the heart and testis. Expression is abundant in neuronal cells of the cerebral cortex, hippocampus and hypothalamic area (at protein level).

The protein resides in the nucleus. Functionally, transcriptional repressor that negatively regulates neuron differentiation by repressing retinoic acid-induced gene transcription. Binds and interrupts RARA from binding to retinoic acid response elements (RARE) composed of tandem 5'-AGGTCA-3' sites known as DR1-DR5. Recognizes and binds 2 copies of the core DNA sequence 5'-CCCCCA-3'. This is Zinc finger protein 536 (Znf536) from Mus musculus (Mouse).